The chain runs to 304 residues: Plasmodesmata-located protein 3 (304 aa).

A signal peptide spans 1 to 26 (MGFYSLKQLLLLYIIIMALFSDLKLA). Residues 27–272 (KSSSPEYTNL…SSSSGTTGKT (246 aa)) are Extracellular-facing. Gnk2-homologous domains lie at 34–138 (TNLI…ISGF) and 143–242 (GMEL…FYPN). 6 disulfides stabilise this stretch: Cys-41–Cys-116, Cys-92–Cys-101, Cys-104–Cys-129, Cys-151–Cys-220, Cys-196–Cys-205, and Cys-208–Cys-233. Residues 273 to 293 (VAIIVGGTAGVGFLVICLLFV) traverse the membrane as a helical segment. The segment at 273–293 (VAIIVGGTAGVGFLVICLLFV) is necessary and sufficient for plasmodesmal targeting. Residues 294-304 (KNLMKKKYDDY) lie on the Cytoplasmic side of the membrane.

Belongs to the cysteine-rich repeat secretory protein family. Plasmodesmata-located proteins (PDLD) subfamily. As to quaternary structure, (Microbial infection) Interacts with Grapevine fanleaf virus (GFLV) 2B-MP. Highly expressed in inflorescence pedacel and shoot apex. Expressed in the outermost L1 layer of the shoot apical meristem and in the epidermis of bulging floral primordia. Within the L1, expression was restricted to the peripheral zone (at protein level).

Its subcellular location is the cell membrane. It localises to the cell junction. It is found in the plasmodesma. Functionally, modulates cell-to-cell trafficking. The protein is Plasmodesmata-located protein 3 of Arabidopsis thaliana (Mouse-ear cress).